The chain runs to 299 residues: J domain-containing protein CG6693 (299 aa).

The region spanning 15 to 82 is the J domain; the sequence is DVYKLMELAR…QKRALYDEQG (68 aa). S239 carries the phosphoserine modification. Residues 266 to 299 are disordered; that stretch reads FEKKKKKSKKPAAKQETKPKLNGVKAGRVEKGKN. Residues 268 to 277 show a composition bias toward basic residues; sequence KKKKKSKKPA.

This is J domain-containing protein CG6693 from Drosophila melanogaster (Fruit fly).